A 255-amino-acid polypeptide reads, in one-letter code: Octanoyltransferase (255 aa).

A BPL/LPL catalytic domain is found at 54–238 (GDAAELVWLL…AFTEIFGATV (185 aa)). Substrate contacts are provided by residues 92–99 (RGGQLTYH), 167–169 (AIG), and 180–182 (GIA). Cys198 (acyl-thioester intermediate) is an active-site residue.

The protein belongs to the LipB family.

It is found in the cytoplasm. It catalyses the reaction octanoyl-[ACP] + L-lysyl-[protein] = N(6)-octanoyl-L-lysyl-[protein] + holo-[ACP] + H(+). It participates in protein modification; protein lipoylation via endogenous pathway; protein N(6)-(lipoyl)lysine from octanoyl-[acyl-carrier-protein]: step 1/2. Its function is as follows. Catalyzes the transfer of endogenously produced octanoic acid from octanoyl-acyl-carrier-protein onto the lipoyl domains of lipoate-dependent enzymes. Lipoyl-ACP can also act as a substrate although octanoyl-ACP is likely to be the physiological substrate. This is Octanoyltransferase from Rhodopseudomonas palustris (strain HaA2).